The sequence spans 22 residues: Chlorate reductase subunit gamma (22 aa).

The interval 1–22 (EXSEQNPNILEIKPGDTVKVXT) is disordered.

In terms of assembly, heterotrimer of alpha, beta and gamma subunits. Requires heme b as cofactor.

The protein resides in the cytoplasm. Functionally, may transfer electrons to the iron-sulfur centers of the beta subunit of chlorate reductase. The polypeptide is Chlorate reductase subunit gamma (Stutzerimonas chloritidismutans (Pseudomonas chloritidismutans)).